We begin with the raw amino-acid sequence, 351 residues long: Homeobox protein rough sheath 1 (351 aa).

Disordered stretches follow at residues 1-23 (MDQS…NSKA), 57-82 (AAAP…GAEM), and 187-229 (GGGS…PRAE). Positions 57-68 (AAAPSSSQQHQQ) are enriched in low complexity. A compositionally biased stretch (basic and acidic residues) spans 214 to 229 (PNGRENDPPEIDPRAE). The 21-residue stretch at 232 to 252 (ELKYQLLKKYSGYLSSLRQEF) folds into the ELK domain. A DNA-binding region (homeobox; TALE-type) is located at residues 253–316 (SKKKKKGKLP…NQRKRHWKPS (64 aa)).

This sequence belongs to the TALE/KNOX homeobox family.

It localises to the nucleus. Its function is as follows. Plays a possible role in patterning the placement of lateral organs along the axis of the shoot. Mutations in RS1 alters cell fate and causes unregulated cell division and expansion in the leaf. Probably binds to the DNA sequence 5'-TGAC-3'. The protein is Homeobox protein rough sheath 1 (RS1) of Zea mays (Maize).